Here is a 209-residue protein sequence, read N- to C-terminus: Adenylate kinase (209 aa).

59 to 64 (GSGKRT) is an ATP binding site. Residues 79–108 (SSGQVLTRGVESGSETSQLAHSYVSRGERV) form an NMP region. AMP-binding positions include Ser80, 106 to 108 (ERV), 135 to 138 (GYPR), and Gln142. The LID stretch occupies residues 172–205 (HRRYDPATNKXYHMLDNPPPGGRCRVMRTAPAEG). Arg173 contributes to the ATP binding site.

The protein belongs to the adenylate kinase family. In terms of assembly, monomer.

It localises to the cytoplasm. The enzyme catalyses AMP + ATP = 2 ADP. In terms of biological role, catalyzes the reversible transfer of the terminal phosphate group between ATP and AMP. Plays an important role in cellular energy homeostasis and in adenine nucleotide metabolism. In Trypanosoma brucei rhodesiense, this protein is Adenylate kinase.